A 458-amino-acid chain; its full sequence is MALWGGRFTQAADQRFKQFNDSLRFDYRLAEQDIVGSVAWSKALVTVGVLTADEQRQLEEALNVLLEEVRANPQQILQSDAEDIHSWVEGKLIDKVGQLGKKLHTGRSRNDQVATDLKLWCKETVRELLTANRQLQSALVETAQANQDAVMPGYTHLQRAQPVTFAHWCLAYVEMLARDESRLQDTLKRLDVSPLGCGALAGTAYEIDREQLAGWLGFTSATRNSLDSVSDRDHVLELLSDAAIGMVHLSRFAEDLIFFNSGEAGFVELSDRVTSGSSLMPQKKNPDALELIRGKCGRVQGALTGMMMTLKGLPLAYNKDMQEDKEGLFDALDTWLDCLHMAALVLDGIQVKRPRCQDAAQQGYANATELADYLVAKGVPFREAHHIVGEAVVEAIRQGKPLEALPLADLQKFSRVIGDDVYPILSLQSCLDKRAAKGGVSPQQVAQAIDDARARLAL.

The protein belongs to the lyase 1 family. Argininosuccinate lyase subfamily.

It is found in the cytoplasm. It catalyses the reaction 2-(N(omega)-L-arginino)succinate = fumarate + L-arginine. The protein operates within amino-acid biosynthesis; L-arginine biosynthesis; L-arginine from L-ornithine and carbamoyl phosphate: step 3/3. The sequence is that of Argininosuccinate lyase from Salmonella paratyphi B (strain ATCC BAA-1250 / SPB7).